The following is a 213-amino-acid chain: Holliday junction resolvase RecU (213 aa).

Positions 99, 101, 114, and 133 each coordinate Mg(2+).

It belongs to the RecU family. Mg(2+) is required as a cofactor.

It localises to the cytoplasm. It catalyses the reaction Endonucleolytic cleavage at a junction such as a reciprocal single-stranded crossover between two homologous DNA duplexes (Holliday junction).. Its function is as follows. Endonuclease that resolves Holliday junction intermediates in genetic recombination. Cleaves mobile four-strand junctions by introducing symmetrical nicks in paired strands. Promotes annealing of linear ssDNA with homologous dsDNA. Required for DNA repair, homologous recombination and chromosome segregation. The protein is Holliday junction resolvase RecU of Lactococcus lactis subsp. lactis (strain IL1403) (Streptococcus lactis).